The chain runs to 224 residues: Glutathione peroxidase 3 (224 aa).

The N-terminal stretch at 1-18 (MAPGSVLSLAVALATIIG) is a signal peptide. N-linked (GlcNAc...) asparagine glycosylation is present at Asn-38. Residue Cys-73 is part of the active site.

The protein belongs to the glutathione peroxidase family.

The protein resides in the secreted. It is found in the extracellular space. The enzyme catalyses 2 glutathione + H2O2 = glutathione disulfide + 2 H2O. The protein is Glutathione peroxidase 3 (gpx-3) of Caenorhabditis elegans.